Here is a 31-residue protein sequence, read N- to C-terminus: Beta-endorphin (31 aa).

This sequence belongs to the POMC family.

Its subcellular location is the secreted. Functionally, beta-endorphin and Met-enkephalin are endogenous opiates. The sequence is that of Beta-endorphin (POMC) from Camelus dromedarius (Dromedary).